Here is a 282-residue protein sequence, read N- to C-terminus: 2-dehydro-3-deoxyphosphooctonate aldolase (282 aa).

This sequence belongs to the KdsA family.

Its subcellular location is the cytoplasm. It carries out the reaction D-arabinose 5-phosphate + phosphoenolpyruvate + H2O = 3-deoxy-alpha-D-manno-2-octulosonate-8-phosphate + phosphate. It participates in carbohydrate biosynthesis; 3-deoxy-D-manno-octulosonate biosynthesis; 3-deoxy-D-manno-octulosonate from D-ribulose 5-phosphate: step 2/3. Its pathway is bacterial outer membrane biogenesis; lipopolysaccharide biosynthesis. This Shewanella baltica (strain OS223) protein is 2-dehydro-3-deoxyphosphooctonate aldolase.